Here is a 125-residue protein sequence, read N- to C-terminus: Ribonuclease P protein component (125 aa).

Belongs to the RnpA family. As to quaternary structure, consists of a catalytic RNA component (M1 or rnpB) and a protein subunit.

It catalyses the reaction Endonucleolytic cleavage of RNA, removing 5'-extranucleotides from tRNA precursor.. RNaseP catalyzes the removal of the 5'-leader sequence from pre-tRNA to produce the mature 5'-terminus. It can also cleave other RNA substrates such as 4.5S RNA. The protein component plays an auxiliary but essential role in vivo by binding to the 5'-leader sequence and broadening the substrate specificity of the ribozyme. The protein is Ribonuclease P protein component of Oleidesulfovibrio alaskensis (strain ATCC BAA-1058 / DSM 17464 / G20) (Desulfovibrio alaskensis).